Here is a 438-residue protein sequence, read N- to C-terminus: Phosphoribosylamine--glycine ligase (438 aa).

The ATP-grasp domain occupies 108–316 (REFMERNDIP…LVEIAEGIVK (209 aa)). 135–194 (IDEYGKPVVVKPLGLTGGKGVKVVGYQLKDNEEAKEYAEYLIKKDGKVLIEERTDGVEFT) contributes to the ATP binding site. Residues Q274, E286, and N288 each coordinate Mg(2+). Mn(2+) contacts are provided by Q274, E286, and N288.

The protein belongs to the GARS family. Requires Mg(2+) as cofactor. Mn(2+) is required as a cofactor.

It catalyses the reaction 5-phospho-beta-D-ribosylamine + glycine + ATP = N(1)-(5-phospho-beta-D-ribosyl)glycinamide + ADP + phosphate + H(+). Its pathway is purine metabolism; IMP biosynthesis via de novo pathway; N(1)-(5-phospho-D-ribosyl)glycinamide from 5-phospho-alpha-D-ribose 1-diphosphate: step 2/2. This is Phosphoribosylamine--glycine ligase from Pyrococcus abyssi (strain GE5 / Orsay).